We begin with the raw amino-acid sequence, 865 residues long: MKTAQIRQKFLDYFESKGHTIESSASLIPHNDKTLLFVNAGMVLFKDVFSGVEKRPYMRAVSVQRCVRAGGKHNDLENVGYTARHHTFFEMLGNFSFGDYFKREAIYYAWEFLTKELNLPKEKLWVSVFEEDDEAENIWINEIGFPKNRISRCGTKDNFWQMGDTGPCGPSSEIFYDYGEHIAGGPPGHADEDGDRYIEIWNLVFTQFDKQEDGHLKPLAVPCVDTGMGLERLAAVLQHKNNNYDTDGFQSLVKAIVNLTPKSNNIKNNNASVRVIADHIRSTAFMIVDGVNPSNEGRGYVLRRIIRRGIRHGHKMGIDKVFFYRLAPVLALEFKDAYPELKQALPKVEKVLKREEQRFSQTLDQGMRLLEDAITNLNGSEIDGKTVFKLYDTYGFPIDLTADIARERHLTIDMLGFEFEMTRQRDRARQAGDFKISKKNVDIIGVTEFLGYEQLENISSILALVKNSKLVEEIKAGEYGIVVLAQSSFYAESGGQVGDSGVLSNAKIEFKVDHTNKQKSGVFEHYGVLNKGVLKVGDTIQANVDKKSRKCIARNHSATHLLHAALRIVLGETVTQKGSLVDSEKLRFDFSHDEVITKSDINKIEGMINRKILGNTKVHTDIINIENAKKKDAIALFGEKYSDTVRVLTMGKDDFSVELCGGTHVKQLGDIGLFRITSESGVSAGVRRIEALTGYDAYQFDNQMQNSLSEISQMTKSNNAQVVEKVTQFIKQQKELEEQITIFQKQLTSNQGDDLIGQVQEVRNIKLLSTVVEGSSGKDLRNIADKLKDKLGSAVIVLAVVSNDKVSLVVGVTKDLTKRYQAVKILNYVAEQIGGKGGGRPDMAQGGGTQPEYLAKALASVKSLI.

Zn(2+) is bound by residues His556, His560, Cys660, and His664.

It belongs to the class-II aminoacyl-tRNA synthetase family. Requires Zn(2+) as cofactor.

It is found in the cytoplasm. It carries out the reaction tRNA(Ala) + L-alanine + ATP = L-alanyl-tRNA(Ala) + AMP + diphosphate. Its function is as follows. Catalyzes the attachment of alanine to tRNA(Ala) in a two-step reaction: alanine is first activated by ATP to form Ala-AMP and then transferred to the acceptor end of tRNA(Ala). Also edits incorrectly charged Ser-tRNA(Ala) and Gly-tRNA(Ala) via its editing domain. This is Alanine--tRNA ligase from Ruthia magnifica subsp. Calyptogena magnifica.